The chain runs to 191 residues: UPF0312 protein SO_3370 (191 aa).

The N-terminal stretch at 1 to 22 (MKKQLFSALIGASLFAPMAVSA) is a signal peptide.

The protein belongs to the UPF0312 family. Type 1 subfamily.

The protein localises to the periplasm. The polypeptide is UPF0312 protein SO_3370 (Shewanella oneidensis (strain ATCC 700550 / JCM 31522 / CIP 106686 / LMG 19005 / NCIMB 14063 / MR-1)).